The sequence spans 1490 residues: ABC transporter CDR4 (1490 aa).

A compositionally biased stretch (polar residues) spans 1–12 (MADADTSSNSSK). Disordered stretches follow at residues 1–26 (MADA…GTYQ) and 53–75 (LKRQ…LSGK). The Cytoplasmic portion of the chain corresponds to 1–516 (MADADTSSNS…NILRIKGNPS (516 aa)). The segment covering 58-67 (SRQESQKSNE) has biased composition (basic and acidic residues). Positions 151-407 (PKYLSLFFRE…FIDMGYECPQ (257 aa)) constitute an ABC transporter 1 domain. Transmembrane regions (helical) follow at residues 517–537 (IHLF…SIFY), 551–571 (AALF…IFSL), 601–621 (LPTK…MVNF), 626–646 (GNFF…SHIF), 659–679 (AMTP…FVIP), and 767–787 (FGIV…LCEI). Residues 788–1182 (NKGAMQKGEI…VFEQNWRTPS (395 aa)) are Cytoplasmic-facing. The region spanning 846–1090 (FFWRDLTYQV…LINYFEKYGA (245 aa)) is the ABC transporter 2 domain. 882-889 (GASGAGKT) provides a ligand contact to ATP. 3 helical membrane passes run 1183-1203 (YLYS…FSFY), 1217-1237 (FSVF…LPTF), and 1268-1288 (IPWN…PVGL). Residue Asn-1291 is glycosylated (N-linked (GlcNAc...) asparagine). 3 consecutive transmembrane segments (helical) span residues 1304–1324 (FMWF…QLCI), 1333–1353 (AANL…VLVT), and 1370–1390 (FTYL…VTCA). An N-linked (GlcNAc...) asparagine glycan is attached at Asn-1424. The helical transmembrane segment at 1455-1475 (IGIYIAFIGINIIGTFILYWF) threads the bilayer.

The protein belongs to the ABC transporter superfamily. ABCG family. PDR (TC 3.A.1.205) subfamily.

The protein localises to the membrane. This is ABC transporter CDR4 (CDR4) from Candida albicans (Yeast).